The following is a 344-amino-acid chain: Ferrochelatase (344 aa).

His214 and Glu295 together coordinate Fe cation.

The protein belongs to the ferrochelatase family.

Its subcellular location is the cytoplasm. The enzyme catalyses heme b + 2 H(+) = protoporphyrin IX + Fe(2+). It participates in porphyrin-containing compound metabolism; protoheme biosynthesis; protoheme from protoporphyrin-IX: step 1/1. Functionally, catalyzes the ferrous insertion into protoporphyrin IX. The sequence is that of Ferrochelatase from Allorhizobium ampelinum (strain ATCC BAA-846 / DSM 112012 / S4) (Agrobacterium vitis (strain S4)).